The sequence spans 77 residues: Small ribosomal subunit protein uS17 (77 aa).

Belongs to the universal ribosomal protein uS17 family. In terms of assembly, part of the 30S ribosomal subunit.

One of the primary rRNA binding proteins, it binds specifically to the 5'-end of 16S ribosomal RNA. This Rickettsia conorii (strain ATCC VR-613 / Malish 7) protein is Small ribosomal subunit protein uS17.